Consider the following 593-residue polypeptide: MGIIDGSLLRRLICLCLWCLLGGGVTVVTAEDEKKVVHKQLNQTPTWAVAAVCTFFIVVSVLLEKLLHKVGKVLWDRHKTALLDALEKIKAELMVLGFISLLLTFGQTYILDICIPSHVARTMLPCPAPNLKKEDDDNGESHRRLLSFEHRFLSGGEASPTKCTKEGYVELISAEALHQLHILIFFLAIFHVLYSFLTMMLGRLKIRGWKHWENETSSHNYEFSTDTSRFRLTHETSFVRAHTSFWTRIPFFFYVGCFFRQFFRSVGRTDYLTLRNGFIAVHLAPGSQFNFQKYIKRSLEDDFKVVVGVSPVLWGSFVLFLLLNIDGFKMMFIGTAIPVIIILAVGTKLQAIMTRMALGITDRHAVVQGMPLVQGNDEYFWFGRPHLILHLMHFALFQNAFQITYFFWIWYSFGSDSCYHPNFKIALVKVAIALGVLCLCSYITLPLYALVTQMGSRMKKSVFDEQTSKALKKWRMAVKKKKGVKATTKRLGGDGSASPTASTVRSTSSVRSLQRYKTTPHSMRYEGLDPETSDLDTDNEALTPPKSPPSFELVVKVEPNKTNTGETSRDTETDSKEFSFVKPAPSNESSQDR.

Topologically, residues 1-46 (MGIIDGSLLRRLICLCLWCLLGGGVTVVTAEDEKKVVHKQLNQTPT) are extracellular. The helical transmembrane segment at 47–67 (WAVAAVCTFFIVVSVLLEKLL) threads the bilayer. Residues 68–92 (HKVGKVLWDRHKTALLDALEKIKAE) lie on the Cytoplasmic side of the membrane. The chain crosses the membrane as a helical span at residues 93–113 (LMVLGFISLLLTFGQTYILDI). Residues 114-181 (CIPSHVARTM…ISAEALHQLH (68 aa)) are Extracellular-facing. The chain crosses the membrane as a helical span at residues 182–202 (ILIFFLAIFHVLYSFLTMMLG). Topologically, residues 203 to 304 (RLKIRGWKHW…IKRSLEDDFK (102 aa)) are cytoplasmic. Residues 305 to 325 (VVVGVSPVLWGSFVLFLLLNI) traverse the membrane as a helical segment. A topological domain (extracellular) is located at residue D326. Residues 327–347 (GFKMMFIGTAIPVIIILAVGT) traverse the membrane as a helical segment. At 348–393 (KLQAIMTRMALGITDRHAVVQGMPLVQGNDEYFWFGRPHLILHLMH) the chain is on the cytoplasmic side. Residues 394–414 (FALFQNAFQITYFFWIWYSFG) form a helical membrane-spanning segment. Residues 415-430 (SDSCYHPNFKIALVKV) lie on the Extracellular side of the membrane. A helical transmembrane segment spans residues 431-451 (AIALGVLCLCSYITLPLYALV). Over 452–593 (TQMGSRMKKS…APSNESSQDR (142 aa)) the chain is Cytoplasmic. A calmodulin-binding region spans residues 465-486 (EQTSKALKKWRMAVKKKKGVKA). The disordered stretch occupies residues 481–593 (KKGVKATTKR…APSNESSQDR (113 aa)). The span at 489–512 (KRLGGDGSASPTASTVRSTSSVRS) shows a compositional bias: low complexity. Over residues 528-539 (LDPETSDLDTDN) the composition is skewed to acidic residues. Residues 567–579 (TSRDTETDSKEFS) are compositionally biased toward basic and acidic residues.

It belongs to the MLO family.

The protein localises to the membrane. Its function is as follows. May be involved in modulation of pathogen defense and leaf cell death. Activity seems to be regulated by Ca(2+)-dependent calmodulin binding and seems not to require heterotrimeric G proteins. This chain is MLO-like protein 8 (MLO8), found in Arabidopsis thaliana (Mouse-ear cress).